A 333-amino-acid chain; its full sequence is Lipoyl synthase (333 aa).

The interval 1-29 is disordered; that stretch reads MTDSAAGATEVATPATPSNKPYDATAKQK. C80, C85, C91, C106, C110, C113, and S320 together coordinate [4Fe-4S] cluster. The 219-residue stretch at 91–309 folds into the Radical SAM core domain; the sequence is CFGKGTATFM…EEKAYEMGFT (219 aa).

Belongs to the radical SAM superfamily. Lipoyl synthase family. It depends on [4Fe-4S] cluster as a cofactor.

It is found in the cytoplasm. The enzyme catalyses [[Fe-S] cluster scaffold protein carrying a second [4Fe-4S](2+) cluster] + N(6)-octanoyl-L-lysyl-[protein] + 2 oxidized [2Fe-2S]-[ferredoxin] + 2 S-adenosyl-L-methionine + 4 H(+) = [[Fe-S] cluster scaffold protein] + N(6)-[(R)-dihydrolipoyl]-L-lysyl-[protein] + 4 Fe(3+) + 2 hydrogen sulfide + 2 5'-deoxyadenosine + 2 L-methionine + 2 reduced [2Fe-2S]-[ferredoxin]. The protein operates within protein modification; protein lipoylation via endogenous pathway; protein N(6)-(lipoyl)lysine from octanoyl-[acyl-carrier-protein]: step 2/2. Catalyzes the radical-mediated insertion of two sulfur atoms into the C-6 and C-8 positions of the octanoyl moiety bound to the lipoyl domains of lipoate-dependent enzymes, thereby converting the octanoylated domains into lipoylated derivatives. The sequence is that of Lipoyl synthase from Ralstonia pickettii (strain 12J).